Consider the following 312-residue polypeptide: MLSPANAKNQRLVSLEDVGVLRGGRWLVRGVEFSVSRGEIVTLIGPNGSGKSTSAKAAIGVLKPDEGRVERLSGLKVGYVPQKLSIDWTLPLTVRRLMTLTGPLPERDMQAALEAAGIAHMIGAEVQHLSGGEFQRALMARAIARKPDLLVLDEPVQGVDFSGEIALYHLIKSIRNASGCGILLISHDLHVVMAETDTVICLNGHVCCRGTPEAVSRSPEYVRLFGSRAAQTLAVYSHHHDHTHLPDGRVLHADGSVTDHCHPEDGHHAHDSQEHAHGQDHVHAHEHSHDDHHGHDHAHEHAHSRSGEGRHA.

The ABC transporter domain maps to 13–228; sequence VSLEDVGVLR…PEYVRLFGSR (216 aa). 45-52 contacts ATP; it reads GPNGSGKS. The segment at 241-312 is disordered; sequence DHTHLPDGRV…HSRSGEGRHA (72 aa). Basic and acidic residues predominate over residues 243-312; it reads THLPDGRVLH…HSRSGEGRHA (70 aa).

It belongs to the ABC transporter superfamily. Zinc importer (TC 3.A.1.15.5) family. As to quaternary structure, the complex is composed of two ATP-binding proteins (ZnuC), two transmembrane proteins (ZnuB) and a solute-binding protein (ZnuA).

The protein resides in the cell inner membrane. The enzyme catalyses Zn(2+)(out) + ATP(in) + H2O(in) = Zn(2+)(in) + ADP(in) + phosphate(in) + H(+)(in). In terms of biological role, part of the ABC transporter complex ZnuABC involved in zinc import. Responsible for energy coupling to the transport system. The chain is Zinc import ATP-binding protein ZnuC from Rhizobium etli (strain ATCC 51251 / DSM 11541 / JCM 21823 / NBRC 15573 / CFN 42).